Here is a 340-residue protein sequence, read N- to C-terminus: Phosphoribosylformylglycinamidine cyclo-ligase (340 aa).

It belongs to the AIR synthase family.

The protein resides in the cytoplasm. It catalyses the reaction 2-formamido-N(1)-(5-O-phospho-beta-D-ribosyl)acetamidine + ATP = 5-amino-1-(5-phospho-beta-D-ribosyl)imidazole + ADP + phosphate + H(+). It functions in the pathway purine metabolism; IMP biosynthesis via de novo pathway; 5-amino-1-(5-phospho-D-ribosyl)imidazole from N(2)-formyl-N(1)-(5-phospho-D-ribosyl)glycinamide: step 2/2. The chain is Phosphoribosylformylglycinamidine cyclo-ligase from Streptococcus pyogenes serotype M28 (strain MGAS6180).